The chain runs to 26 residues: Toxin b subunit alpha (26 aa).

In terms of assembly, toxin b is a heterodimer composed of toxin alpha and toxin beta. Expressed by the venom gland.

It is found in the secreted. Functionally, binds to sodium channels (Nav) and affects the channel activation process. The protein is Toxin b subunit alpha of Androctonus crassicauda (Arabian fat-tailed scorpion).